A 415-amino-acid polypeptide reads, in one-letter code: Hepatocyte nuclear factor 3-beta (415 aa).

A DNA-binding region (fork-head) is located at residues 150-244 (KPPYSYISLI…ENGCYLRRQK (95 aa)). Residues 251–262 (KMSMKEPGRKGG) are compositionally biased toward basic and acidic residues. The tract at residues 251 to 324 (KMSMKEPGRK…GQHLMSQHHS (74 aa)) is disordered. Residues 266–277 (SANSSSDSCNGN) are compositionally biased toward low complexity. Positions 310–323 (SPVSQGQHLMSQHH) are enriched in polar residues.

It localises to the nucleus. Transcription activator for a number of liver genes. Interacts with the cis-acting regulatory regions of these genes. The sequence is that of Hepatocyte nuclear factor 3-beta (foxa2) from Oryzias latipes (Japanese rice fish).